The sequence spans 520 residues: Sodium-dependent dicarboxylate transporter SdcS (520 aa).

The next 14 helical transmembrane spans lie at 30 to 50, 55 to 75, 77 to 97, 104 to 124, 160 to 180, 207 to 227, 242 to 262, 298 to 318, 323 to 343, 362 to 382, 399 to 419, 428 to 448, 452 to 472, and 491 to 511; these read AGQL…LLFF, LPWK…WWIT, AIPI…GHIL, SEYG…AIAM, SMFV…LAII, IGYA…PLII, FAKW…ITWL, KVVQ…EFLL, VTSS…LFII, ELPW…KGIS, GVSP…LTEV, MILP…LLLM, AMAA…AIIF, and LISA…VLGI.

The protein belongs to the SLC13A/DASS transporter (TC 2.A.47) family. NADC subfamily.

The protein resides in the cell membrane. Mediates the transport of the dicarboxylates fumarate, malate, and succinate across the cytoplasmic membrane via a Na(+)-electrochemical gradient. The polypeptide is Sodium-dependent dicarboxylate transporter SdcS (sdcS) (Staphylococcus aureus (strain USA300)).